Reading from the N-terminus, the 624-residue chain is ABC transporter G family member 23 (624 aa).

Positions 52–296 constitute an ABC transporter domain; it reads LTVTNLSYTI…IAKLGFQIPE (245 aa). Residue 84-91 participates in ATP binding; it reads GPSGTGKS. One can recognise an ABC transmembrane type-2 domain in the interval 350 to 560; sequence TEISYLCSRF…PLESMVVNEY (211 aa). 6 helical membrane-spanning segments follow: residues 369-389, 402-422, 450-470, 480-500, 511-531, and 595-615; these read LFLARTMQAVVAGLGLGSVYT, LGLFAFSLSFLLSSTVEALPI, IAFVPFLFVVSLLFSIPVYWI, FSFFVLCVWLIILMASSLVLF, GNSLICTVLGAFFLFSGYFIP, and INVGIMLAFFVFYRILCWGIL.

Belongs to the ABC transporter superfamily. ABCG family. Eye pigment precursor importer (TC 3.A.1.204) subfamily.

Its subcellular location is the membrane. The chain is ABC transporter G family member 23 (ABCG23) from Arabidopsis thaliana (Mouse-ear cress).